Here is a 222-residue protein sequence, read N- to C-terminus: 7-cyano-7-deazaguanine synthase (222 aa).

11–21 (FSGGQDSTTCL) is an ATP binding site. Zn(2+) is bound by residues C187, C195, C198, and C201.

This sequence belongs to the QueC family. It depends on Zn(2+) as a cofactor.

It catalyses the reaction 7-carboxy-7-deazaguanine + NH4(+) + ATP = 7-cyano-7-deazaguanine + ADP + phosphate + H2O + H(+). Its pathway is purine metabolism; 7-cyano-7-deazaguanine biosynthesis. Catalyzes the ATP-dependent conversion of 7-carboxy-7-deazaguanine (CDG) to 7-cyano-7-deazaguanine (preQ(0)). The chain is 7-cyano-7-deazaguanine synthase from Actinobacillus pleuropneumoniae serotype 7 (strain AP76).